A 99-amino-acid chain; its full sequence is Small ribosomal subunit protein bS16 (99 aa).

Positions 80 to 99 (PPRQQNEAKRETAETAQPEA) are disordered.

The protein belongs to the bacterial ribosomal protein bS16 family.

The chain is Small ribosomal subunit protein bS16 from Thermomicrobium roseum (strain ATCC 27502 / DSM 5159 / P-2).